We begin with the raw amino-acid sequence, 128 residues long: uncharacterized protein (128 aa).

4 consecutive transmembrane segments (helical) span residues leucine 2–leucine 22, phenylalanine 34–cysteine 54, leucine 64–leucine 84, and leucine 108–leucine 128.

It is found in the cell membrane. This is an uncharacterized protein from Treponema pallidum (strain Nichols).